Consider the following 282-residue polypeptide: uncharacterized protein (282 aa).

The N-acetyltransferase domain maps to 5 to 140 (DELIKLHEEH…SFQPYTKKLD (136 aa)).

This sequence belongs to the acetyltransferase family.

This is an uncharacterized protein from Bacillus subtilis (strain 168).